The following is a 761-amino-acid chain: Zinc finger protein 711 (761 aa).

5 consecutive C2H2-type zinc fingers follow at residues 383–408, 414–436, 476–499, 505–527, and 533–556; these read YPCH…HPDH, YQCT…LESH, HKCK…LAVH, HVCV…MRTH, and FHCQ…KSKH. The segment at 562 to 584 adopts a C2H2-type 6; atypical zinc-finger fold; the sequence is FKCGHCPQAFADDKELQRHAEIF. Residues C564, C567, and H580 each coordinate Zn(2+). 6 consecutive C2H2-type zinc fingers follow at residues 590-613, 619-641, 647-670, 676-698, 704-727, and 733-755; these read HQCP…ISVH, HKCD…SETH, HQCR…LSVH, FKCK…MKTH, YQCQ…ISIH, and HRCD…IMRH.

Belongs to the krueppel C2H2-type zinc-finger protein family. In terms of tissue distribution, present in ovary and brain but not in other tissues (at protein level).

The protein localises to the nucleus. It is found in the cytoplasm. Transcription regulator required for brain development. Probably acts as a transcription factor that binds to the promoter of target genes, leading to activate their expression. This chain is Zinc finger protein 711 (znf711), found in Danio rerio (Zebrafish).